We begin with the raw amino-acid sequence, 62 residues long: Photosystem II reaction center protein Z (62 aa).

Helical transmembrane passes span 8-28 and 41-61; these read LVSILILLSFALVVGVPVILV and YASAGLWFGLVIVTAAFNSFV.

Belongs to the PsbZ family. In terms of assembly, PSII is composed of 1 copy each of membrane proteins PsbA, PsbB, PsbC, PsbD, PsbE, PsbF, PsbH, PsbI, PsbJ, PsbK, PsbL, PsbM, PsbT, PsbX, PsbY, PsbZ, Psb30/Ycf12, at least 3 peripheral proteins of the oxygen-evolving complex and a large number of cofactors. It forms dimeric complexes.

Its subcellular location is the plastid. It is found in the chloroplast thylakoid membrane. Its function is as follows. May control the interaction of photosystem II (PSII) cores with the light-harvesting antenna, regulates electron flow through the 2 photosystem reaction centers. PSII is a light-driven water plastoquinone oxidoreductase, using light energy to abstract electrons from H(2)O, generating a proton gradient subsequently used for ATP formation. The sequence is that of Photosystem II reaction center protein Z from Guillardia theta (Cryptophyte).